Here is a 1410-residue protein sequence, read N- to C-terminus: Ribosome-binding protein 1 (1410 aa).

At 1–7 the chain is on the lumenal side; that stretch reads MDIYDTQ. A helical membrane pass occupies residues 8–28; it reads TLGVVVFGGFMVVSAIGIFLV. Residues 29 to 1410 are Cytoplasmic-facing; it reads STFSMKETSY…GSSSKEGTSV (1382 aa). Disordered regions lie at residues 44–90 and 129–152; these read NQRK…DPAP and QEKL…VEPA. Basic residues predominate over residues 52 to 63; sequence THHQKVEKKKKE. The span at 64–88 shows a compositional bias: basic and acidic residues; that stretch reads KTVEKKGKTKKKEEKPNGKIPDHDP. A Glycyl lysine isopeptide (Lys-Gly) (interchain with G-Cter in SUMO2) cross-link involves residue K148. Phosphoserine is present on residues S159 and S165. Disordered stretches follow at residues 173 to 648 and 895 to 925; these read APKE…PLYL and QSSH…LQSS. 2 stretches are compositionally biased toward polar residues: residues 191 to 209 and 225 to 238; these read TPAT…QNQS and TPNQ…TPNQ. A run of 33 repeats spans residues 197 to 206, 207 to 216, 217 to 226, 227 to 236, 237 to 246, 247 to 256, 257 to 266, 267 to 276, 277 to 286, 287 to 296, 297 to 306, 307 to 316, 317 to 326, 327 to 336, 337 to 346, 347 to 356, 357 to 366, 367 to 376, 377 to 386, 387 to 396, 397 to 406, 407 to 416, 417 to 426, 427 to 436, 437 to 446, 447 to 456, 457 to 466, 467 to 476, 477 to 486, 487 to 496, 497 to 506, 507 to 516, and 517 to 526. Residues 197–604 form a 41 X 10 AA approximate tandem repeats of [TN]-Q-[GSA]-[KRQT]-K-[ATGSV]-[ED]-[GTAS]-[ATIS]-[PQTAS] region; that stretch reads TQGKKAEGTQ…NQGKKTESAS (408 aa). Phosphothreonine is present on residues T225, T235, T245, and T255. Composition is skewed to polar residues over residues 265–278 and 295–519; these read AQNQ…TPNQ and AQNQ…QNQG. Residues 520 to 532 show a composition bias toward basic and acidic residues; the sequence is KKTEGAQGKKAER. The stretch at 527-534 is one 34; approximate repeat; the sequence is GKKAERSP. Phosphoserine is present on S533. Repeat unit 35 spans residues 535 to 544; the sequence is NQGKKGEGAP. The stretch at 545 to 554 is one 36; approximate repeat; the sequence is IQGKKADSVA. Residues 553-567 show a composition bias toward polar residues; sequence VANQGTKVEGITNQG. 2 repeat units span residues 555 to 564 and 565 to 574. The span at 568–581 shows a compositional bias: basic and acidic residues; it reads KKAEGSPSEGKKAE. Phosphoserine is present on residues S573 and S583. One copy of the 39; approximate repeat lies at 575–584; it reads SEGKKAEGSP. 2 repeat units span residues 585–594 and 595–604. A compositionally biased stretch (polar residues) spans 602-612; that stretch reads SASVQGRNTDV. At S615 the chain carries Phosphoserine. K620 is covalently cross-linked (Glycyl lysine isopeptide (Lys-Gly) (interchain with G-Cter in SUMO1)). S900 carries the phosphoserine modification. K932 carries the post-translational modification N6-acetyllysine. 2 positions are modified to phosphoserine: S959 and S978. Disordered stretches follow at residues 1093 to 1122, 1260 to 1287, 1330 to 1362, and 1378 to 1410; these read GPTL…ETQS, EMKS…EQDP, EKLR…LTSD, and QEQL…GTSV. 2 positions are modified to phosphoserine: S1276 and S1277. Basic and acidic residues-rich tracts occupy residues 1347–1360 and 1381–1403; these read SQLK…KKLT and LARE…DGSS.

It localises to the endoplasmic reticulum membrane. Acts as a ribosome receptor and mediates interaction between the ribosome and the endoplasmic reticulum membrane. This is Ribosome-binding protein 1 (RRBP1) from Homo sapiens (Human).